Reading from the N-terminus, the 590-residue chain is Proline--tRNA ligase (590 aa).

The protein belongs to the class-II aminoacyl-tRNA synthetase family. ProS type 1 subfamily. Homodimer.

Its subcellular location is the cytoplasm. It catalyses the reaction tRNA(Pro) + L-proline + ATP = L-prolyl-tRNA(Pro) + AMP + diphosphate. In terms of biological role, catalyzes the attachment of proline to tRNA(Pro) in a two-step reaction: proline is first activated by ATP to form Pro-AMP and then transferred to the acceptor end of tRNA(Pro). As ProRS can inadvertently accommodate and process non-cognate amino acids such as alanine and cysteine, to avoid such errors it has two additional distinct editing activities against alanine. One activity is designated as 'pretransfer' editing and involves the tRNA(Pro)-independent hydrolysis of activated Ala-AMP. The other activity is designated 'posttransfer' editing and involves deacylation of mischarged Ala-tRNA(Pro). The misacylated Cys-tRNA(Pro) is not edited by ProRS. The chain is Proline--tRNA ligase from Clavibacter sepedonicus (Clavibacter michiganensis subsp. sepedonicus).